We begin with the raw amino-acid sequence, 139 residues long: Phosphoribosyl-AMP cyclohydrolase (139 aa).

Asp95 is a Mg(2+) binding site. Cys96 is a Zn(2+) binding site. 2 residues coordinate Mg(2+): Asp97 and Asp99. Zn(2+)-binding residues include Cys114 and Cys121.

Belongs to the PRA-CH family. As to quaternary structure, homodimer. It depends on Mg(2+) as a cofactor. Requires Zn(2+) as cofactor.

The protein resides in the cytoplasm. The enzyme catalyses 1-(5-phospho-beta-D-ribosyl)-5'-AMP + H2O = 1-(5-phospho-beta-D-ribosyl)-5-[(5-phospho-beta-D-ribosylamino)methylideneamino]imidazole-4-carboxamide. The protein operates within amino-acid biosynthesis; L-histidine biosynthesis; L-histidine from 5-phospho-alpha-D-ribose 1-diphosphate: step 3/9. Its function is as follows. Catalyzes the hydrolysis of the adenine ring of phosphoribosyl-AMP. The sequence is that of Phosphoribosyl-AMP cyclohydrolase from Chelativorans sp. (strain BNC1).